The chain runs to 534 residues: Beta-1,2-xylosyltransferase (534 aa).

The Cytoplasmic portion of the chain corresponds to 1-11; sequence MSKRNPKILKI. A helical; Signal-anchor for type II membrane protein transmembrane segment spans residues 12-34; the sequence is FLYMLLLNSLFLIIYFVFHSSSF. At 35 to 534 the chain is on the lumenal side; that stretch reads SPEQSQPPHI…LTEIMKSLGC (500 aa). Residues Asn51, Asn301, and Asn479 are each glycosylated (N-linked (GlcNAc...) asparagine).

In terms of processing, glycosylation at least at one of the two sites Asn-51 and Asn-301 is necessary for enzyme stability and activity.

Its subcellular location is the golgi apparatus membrane. The catalysed reaction is N(4)-{beta-D-GlcNAc-(1-&gt;2)-alpha-D-Man-(1-&gt;3)-[beta-D-GlcNAc-(1-&gt;2)-alpha-D-Man-(1-&gt;6)]-beta-D-Man-(1-&gt;4)-beta-D-GlcNAc-(1-&gt;4)-beta-D-GlcNAc}-L-asparaginyl-[protein] + UDP-alpha-D-xylose = N(4)-{beta-D-GlcNAc-(1-&gt;2)-alpha-D-Man-(1-&gt;3)-[beta-D-GlcNAc-(1-&gt;2)-alpha-D-Man-(1-&gt;6)]-[beta-D-Xyl-(1-&gt;2)]-beta-D-Man-(1-&gt;4)-beta-D-GlcNAc-(1-&gt;4)-beta-D-GlcNAc}-L-asparaginyl-[protein] + UDP + H(+). The protein operates within protein modification; protein glycosylation. In terms of biological role, glycosyltransferase involved in the xylosylation of N-glycans. Possesses beta-1,2-xylosyltransferase activity, transferring xylose from UDP-xylose to the core beta-linked mannose of N-glycans. Involved in the biosynthesis of glycoprotein bound N-glycans. Does not require metal ions for its activity. This chain is Beta-1,2-xylosyltransferase, found in Arabidopsis thaliana (Mouse-ear cress).